Here is a 110-residue protein sequence, read N- to C-terminus: Large ribosomal subunit protein uL22 (110 aa).

This sequence belongs to the universal ribosomal protein uL22 family. Part of the 50S ribosomal subunit.

In terms of biological role, this protein binds specifically to 23S rRNA; its binding is stimulated by other ribosomal proteins, e.g. L4, L17, and L20. It is important during the early stages of 50S assembly. It makes multiple contacts with different domains of the 23S rRNA in the assembled 50S subunit and ribosome. The globular domain of the protein is located near the polypeptide exit tunnel on the outside of the subunit, while an extended beta-hairpin is found that lines the wall of the exit tunnel in the center of the 70S ribosome. The polypeptide is Large ribosomal subunit protein uL22 (Cellvibrio japonicus (strain Ueda107) (Pseudomonas fluorescens subsp. cellulosa)).